A 615-amino-acid polypeptide reads, in one-letter code: Putative DNA ligase 205R (615 aa).

The active-site N6-AMP-lysine intermediate is the Lys-101.

Belongs to the NAD-dependent DNA ligase family.

It carries out the reaction NAD(+) + (deoxyribonucleotide)n-3'-hydroxyl + 5'-phospho-(deoxyribonucleotide)m = (deoxyribonucleotide)n+m + AMP + beta-nicotinamide D-nucleotide.. Functionally, catalyzes the formation of phosphodiester linkages between 5'-phosphoryl and 3'-hydroxyl groups in double-stranded DNA using NAD as a coenzyme and as the energy source for the reaction. This chain is Putative DNA ligase 205R, found in Invertebrate iridescent virus 6 (IIV-6).